Consider the following 141-residue polypeptide: Large ribosomal subunit protein uL11 (141 aa).

This sequence belongs to the universal ribosomal protein uL11 family. Part of the ribosomal stalk of the 50S ribosomal subunit. Interacts with L10 and the large rRNA to form the base of the stalk. L10 forms an elongated spine to which L12 dimers bind in a sequential fashion forming a multimeric L10(L12)X complex. One or more lysine residues are methylated.

In terms of biological role, forms part of the ribosomal stalk which helps the ribosome interact with GTP-bound translation factors. The sequence is that of Large ribosomal subunit protein uL11 from Chlorobium luteolum (strain DSM 273 / BCRC 81028 / 2530) (Pelodictyon luteolum).